We begin with the raw amino-acid sequence, 190 residues long: Nucleoside triphosphate pyrophosphatase (190 aa).

Asp-69 serves as the catalytic Proton acceptor.

Belongs to the Maf family. Requires a divalent metal cation as cofactor.

The protein localises to the cytoplasm. The catalysed reaction is a ribonucleoside 5'-triphosphate + H2O = a ribonucleoside 5'-phosphate + diphosphate + H(+). It catalyses the reaction a 2'-deoxyribonucleoside 5'-triphosphate + H2O = a 2'-deoxyribonucleoside 5'-phosphate + diphosphate + H(+). Its function is as follows. Nucleoside triphosphate pyrophosphatase. May have a dual role in cell division arrest and in preventing the incorporation of modified nucleotides into cellular nucleic acids. In Helicobacter pylori (strain Shi470), this protein is Nucleoside triphosphate pyrophosphatase.